We begin with the raw amino-acid sequence, 146 residues long: Hemoglobin subunit beta (146 aa).

Val-1 is modified (N-acetylvaline). The 145-residue stretch at 2–146 (QLSGEEKAAV…VANALAHKYH (145 aa)) folds into the Globin domain. Ser-44 is modified (phosphoserine). N6-acetyllysine is present on Lys-59. His-63 serves as a coordination point for heme b. Lys-82 carries the post-translational modification N6-acetyllysine. A heme b-binding site is contributed by His-92. Cys-93 carries the post-translational modification S-nitrosocysteine. Position 144 is an N6-acetyllysine (Lys-144).

This sequence belongs to the globin family. In terms of assembly, heterotetramer of two alpha chains and two beta chains. As to expression, red blood cells.

In terms of biological role, involved in oxygen transport from the lung to the various peripheral tissues. The sequence is that of Hemoglobin subunit beta (HBB) from Equus hemionus kulan (Turkmenian kulan).